The primary structure comprises 260 residues: MSATGEVLTPQGYISHHLTHLQVGSGFWTVNIDSMIFSVLLGALFIWSFRRVAVKATSGVPGKLQCFVEMLVEFVSGNVKDIFHGRNKVIAPLGLTVFVWIFLMNLMDLIPVDFIPHAAQLMGVPYLRVVPSADVNITMSMALGVFFLILYYSIKVKGIGGFVKELTLQPFNHPAAIPVNLILETVTLISKPVSLGLRLFGNMYAGELIFILIAGLLPWWSQWILSVPWAIFHILIITLQAFIFMVLTIVYLSMAQEDHG.

The next 5 helical transmembrane spans lie at 27-47 (FWTV…LFIW), 90-110 (IAPL…MDLI), 132-154 (SADV…YYSI), 208-228 (LIFI…LSVP), and 230-250 (AIFH…LTIV).

This sequence belongs to the ATPase A chain family. In terms of assembly, F-type ATPases have 2 components, CF(1) - the catalytic core - and CF(0) - the membrane proton channel. CF(1) has five subunits: alpha(3), beta(3), gamma(1), delta(1), epsilon(1). CF(0) has three main subunits: a(1), b(2) and c(9-12). The alpha and beta chains form an alternating ring which encloses part of the gamma chain. CF(1) is attached to CF(0) by a central stalk formed by the gamma and epsilon chains, while a peripheral stalk is formed by the delta and b chains.

The protein localises to the cell inner membrane. Key component of the proton channel; it plays a direct role in the translocation of protons across the membrane. The polypeptide is ATP synthase subunit a (Aeromonas hydrophila subsp. hydrophila (strain ATCC 7966 / DSM 30187 / BCRC 13018 / CCUG 14551 / JCM 1027 / KCTC 2358 / NCIMB 9240 / NCTC 8049)).